Consider the following 361-residue polypeptide: Homocitrate synthase (361 aa).

The Pyruvate carboxyltransferase domain occupies 1–249; that stretch reads MILDSTLREG…VKKYRLDKLY (249 aa). Arginine 8 provides a ligand contact to 2-oxoglutarate. Glutamate 9 is a binding site for Mg(2+). 3 residues coordinate 2-oxoglutarate: histidine 68, arginine 128, and threonine 162. Histidine 188 and histidine 190 together coordinate Mg(2+). The active-site Proton acceptor is histidine 282.

The protein belongs to the alpha-IPM synthase/homocitrate synthase family. Homocitrate synthase LYS20/LYS21 subfamily. It depends on Mg(2+) as a cofactor. Requires Mn(2+) as cofactor.

The catalysed reaction is acetyl-CoA + 2-oxoglutarate + H2O = (2R)-homocitrate + CoA + H(+). It participates in amino-acid biosynthesis; L-lysine biosynthesis via AAA pathway; L-alpha-aminoadipate from 2-oxoglutarate: step 1/5. Functionally, catalyzes the aldol-type condensation of 2-oxoglutarate with acetyl-CoA to yield homocitrate. Carries out the first step of the alpha-aminoadipate (AAA) lysine biosynthesis pathway. This Pyrococcus horikoshii (strain ATCC 700860 / DSM 12428 / JCM 9974 / NBRC 100139 / OT-3) protein is Homocitrate synthase.